A 563-amino-acid chain; its full sequence is Protein disulfide isomerase-like 1-4 (563 aa).

The N-terminal stretch at 1-22 (MRSRSLLLVALATLLLHASASA) is a signal peptide. Positions 40–64 (NDPDGWLQEGSPDDDDDDDLFHHGQ) are disordered. The 135-residue stretch at 46–180 (LQEGSPDDDD…IVSWVNKKLA (135 aa)) folds into the Thioredoxin 1 domain. An N-linked (GlcNAc...) asparagine glycan is attached at N82. Residues C102 and C105 each act as nucleophile in the active site. C102 and C105 are disulfide-bonded. 2 N-linked (GlcNAc...) asparagine glycosylation sites follow: N185 and N315. Positions 394 to 523 (FLEEKLTPFY…MYKFIKKHAS (130 aa)) constitute a Thioredoxin 2 domain. Residues C444 and C447 each act as nucleophile in the active site. C444 and C447 are disulfide-bonded. Over residues 529–542 (KRPDSSATKTEKDQ) the composition is skewed to basic and acidic residues. A disordered region spans residues 529–563 (KRPDSSATKTEKDQSTASTNLRGERSSGTNFKDEL). The segment covering 543 to 563 (STASTNLRGERSSGTNFKDEL) has biased composition (polar residues). The Prevents secretion from ER signature appears at 560-563 (KDEL).

The protein belongs to the protein disulfide isomerase family.

It is found in the endoplasmic reticulum lumen. The catalysed reaction is Catalyzes the rearrangement of -S-S- bonds in proteins.. Functionally, acts as a protein-folding catalyst that interacts with nascent polypeptides to catalyze the formation, isomerization, and reduction or oxidation of disulfide bonds. May play a role in storage protein biogenesis. This is Protein disulfide isomerase-like 1-4 (PDIL1-4) from Oryza sativa subsp. japonica (Rice).